The following is a 505-amino-acid chain: Glycerol kinase (505 aa).

T13 is an ADP binding site. ATP contacts are provided by T13, T14, and S15. A sn-glycerol 3-phosphate-binding site is contributed by T13. R17 is an ADP binding site. 4 residues coordinate sn-glycerol 3-phosphate: R83, E84, Y135, and D247. R83, E84, Y135, D247, and Q248 together coordinate glycerol. The ADP site is built by T269 and G313. The ATP site is built by T269, G313, Q317, and G414. 2 residues coordinate ADP: G414 and N418.

Belongs to the FGGY kinase family.

The enzyme catalyses glycerol + ATP = sn-glycerol 3-phosphate + ADP + H(+). It functions in the pathway polyol metabolism; glycerol degradation via glycerol kinase pathway; sn-glycerol 3-phosphate from glycerol: step 1/1. With respect to regulation, inhibited by fructose 1,6-bisphosphate (FBP). Functionally, key enzyme in the regulation of glycerol uptake and metabolism. Catalyzes the phosphorylation of glycerol to yield sn-glycerol 3-phosphate. The polypeptide is Glycerol kinase (Clavibacter michiganensis subsp. michiganensis (strain NCPPB 382)).